The chain runs to 335 residues: Syntaxin-18 (335 aa).

Residues 1–309 (MAVDITLLFR…EDIREAIKNN (309 aa)) lie on the Cytoplasmic side of the membrane. Basic and acidic residues predominate over residues 168 to 208 (KLEPEPNTKTRESTSSEKVSRSPSKDSEENPATEERPEKIL). Residues 168 to 226 (KLEPEPNTKTRESTSSEKVSRSPSKDSEENPATEERPEKILAETQPELGTWGDGKGEDE) form a disordered region. The 63-residue stretch at 243 to 305 (IGEMNSLFDE…KEGNEDIREA (63 aa)) folds into the t-SNARE coiled-coil homology domain. The chain crosses the membrane as a helical; Anchor for type IV membrane protein span at residues 310-330 (AGFRVWILFFLVMCSFSLLFL). Over 331–335 (DWYDS) the chain is Vesicular.

This sequence belongs to the syntaxin family. Component of a SNARE complex consisting of STX18, USE1L, BNIP1/SEC20L, and SEC22B. RINT1/TIP20L and ZW10 are associated with the complex through interaction with BNIP1/SEC20L. Interacts directly with USE1L and BNIP1/SEC20L.

The protein localises to the endoplasmic reticulum membrane. Its subcellular location is the golgi apparatus membrane. Syntaxin that may be involved in targeting and fusion of Golgi-derived retrograde transport vesicles with the ER. The protein is Syntaxin-18 (STX18) of Pongo abelii (Sumatran orangutan).